We begin with the raw amino-acid sequence, 791 residues long: MTAEFDEEVVFENSPLFQYLQDLGQTDFEICPLSKEEEHLAGNGHGEQDVHTTEKKSNISRTVEFLKSWSPLFSKKKRDEKICLLENGFRLESLRTILQQEVLIQEDVELIELLDPGILSAGQTQNQQNGHLPTLWSIATPNIWEMSVLFAFLSALAALQSWSISSSLVWGPSLILFAAFTVLRALHTWRSATLRMILRKYCNQVEGTVLNSRAFTNLVRKALRLIQETEVISRGFTLLLDRVSAACPYGKAGQHASQHLLGLRKAVYRTVRTNFRISRLATLYMLKHYPLNSEIDNVTNYICVVPLKDLGLGLCEEHVSEEEAHNLTDAFSLPALKVLFQLWIGQSSEFFRRLALLLSPENAAQGHLASPEQLPHLIWSDVVQDLPHTQAACLAELKRSYEFYRYFETQHQSGFERTAKRKKEVGELSNLHGAVRSLQLHLKALLNEVIILEDELEKLSSCKEMQAMTQEASLMLEEKLRIIQPHVQASNTCWEEALCQVGRMVRRPAAKKDIEKSSCENLNFPVVSNMPPALRIEDRDPVPEEQILEAYVEEAVTDQEFNSEDIYLFSPEERERQKREREESKRVLQELKAVLGLKASEAERQKWKQLLFSEHAVITPFLPEEPVGHFEPPDSVYPEDPCKNLGFYGEFTSEINGTEHAKDTPNQGDLQMNMNHEDEAKICPLSEEAEPESGKDENESPCPVPRTVLPPAIKERLARIHQTSDLNFTSGLAAQVAARSLTFTFLQEQTFGDEWDDDDDDNDNDDDNYDQVKNVESHEKERNNVSLQLEE.

2 helical membrane-spanning segments follow: residues Ile138–Ala158 and Ser163–Leu183. Positions Val435 to Glu464 form a coiled coil. Acidic residues predominate over residues Gly752–Tyr769. The tract at residues Gly752–Glu791 is disordered. The span at Lys773 to Asn783 shows a compositional bias: basic and acidic residues.

Belongs to the vezatin family. In terms of assembly, interacts with myosin VIIa and the cadherin-catenins complex.

The protein localises to the cell membrane. It is found in the cell junction. Its subcellular location is the adherens junction. The protein resides in the nucleus. Its function is as follows. Plays a pivotal role in the establishment of adherens junctions and their maintenance in adult life. The polypeptide is Vezatin (vezt) (Xenopus tropicalis (Western clawed frog)).